The primary structure comprises 447 residues: ATP-dependent 6-phosphofructokinase (447 aa).

Residues Gly-88, Arg-154 to Gly-155, and Gly-179 to Thr-182 each bind ATP. Residue Asp-180 participates in Mg(2+) binding. Substrate-binding positions include Thr-208–Asp-210, Met-253–Arg-255, Glu-315, and Tyr-368–Arg-371. Asp-210 functions as the Proton acceptor in the catalytic mechanism.

This sequence belongs to the phosphofructokinase type A (PFKA) family. PPi-dependent PFK group II subfamily. Atypical ATP-dependent clade 'X' sub-subfamily. In terms of assembly, homodimer. Mg(2+) is required as a cofactor.

The protein localises to the cytoplasm. The catalysed reaction is beta-D-fructose 6-phosphate + ATP = beta-D-fructose 1,6-bisphosphate + ADP + H(+). The protein operates within carbohydrate degradation; glycolysis; D-glyceraldehyde 3-phosphate and glycerone phosphate from D-glucose: step 3/4. In terms of biological role, catalyzes the phosphorylation of D-fructose 6-phosphate to fructose 1,6-bisphosphate by ATP, the first committing step of glycolysis. The sequence is that of ATP-dependent 6-phosphofructokinase from Borreliella burgdorferi (strain ATCC 35210 / DSM 4680 / CIP 102532 / B31) (Borrelia burgdorferi).